The following is a 228-amino-acid chain: Large ribosomal subunit protein uL4 (228 aa).

Disordered stretches follow at residues 45–102 (GRQG…SQRT) and 208–228 (PAKG…EANQ). Residues 208-221 (PAKGKTAKAAATSG) are compositionally biased toward low complexity.

This sequence belongs to the universal ribosomal protein uL4 family. In terms of assembly, part of the 50S ribosomal subunit.

One of the primary rRNA binding proteins, this protein initially binds near the 5'-end of the 23S rRNA. It is important during the early stages of 50S assembly. It makes multiple contacts with different domains of the 23S rRNA in the assembled 50S subunit and ribosome. Its function is as follows. Forms part of the polypeptide exit tunnel. This Saccharopolyspora erythraea (strain ATCC 11635 / DSM 40517 / JCM 4748 / NBRC 13426 / NCIMB 8594 / NRRL 2338) protein is Large ribosomal subunit protein uL4.